Consider the following 253-residue polypeptide: Adenylate kinase (253 aa).

15–20 lines the ATP pocket; that stretch reads GSGKGT. The NMP stretch occupies residues 35 to 64; that stretch reads SSGDLLRNAVSQNTPLGQEIKSYLDQGKLL. Residues S36, R41, 62-64, 103-106, and Q110 contribute to the AMP site; these read KLL and GFPR. The tract at residues 143 to 176 is LID; that stretch reads SRYICPSCQGIYNKQQGFSRCPKCLVELTRRSDD. R144 contributes to the ATP binding site. 2 residues coordinate Zn(2+): C147 and C150. An ATP-binding site is contributed by 153–154; it reads IY. Zn(2+)-binding residues include C163 and C166. R173 and R184 together coordinate AMP. A212 contacts ATP.

It belongs to the adenylate kinase family. Monomer.

The protein localises to the cytoplasm. The catalysed reaction is AMP + ATP = 2 ADP. Its pathway is purine metabolism; AMP biosynthesis via salvage pathway; AMP from ADP: step 1/1. Functionally, catalyzes the reversible transfer of the terminal phosphate group between ATP and AMP. Plays an important role in cellular energy homeostasis and in adenine nucleotide metabolism. The chain is Adenylate kinase from Chlamydia muridarum (strain MoPn / Nigg).